The chain runs to 212 residues: ATP phosphoribosyltransferase (212 aa).

The protein belongs to the ATP phosphoribosyltransferase family. Short subfamily. As to quaternary structure, heteromultimer composed of HisG and HisZ subunits.

The protein resides in the cytoplasm. It catalyses the reaction 1-(5-phospho-beta-D-ribosyl)-ATP + diphosphate = 5-phospho-alpha-D-ribose 1-diphosphate + ATP. It participates in amino-acid biosynthesis; L-histidine biosynthesis; L-histidine from 5-phospho-alpha-D-ribose 1-diphosphate: step 1/9. In terms of biological role, catalyzes the condensation of ATP and 5-phosphoribose 1-diphosphate to form N'-(5'-phosphoribosyl)-ATP (PR-ATP). Has a crucial role in the pathway because the rate of histidine biosynthesis seems to be controlled primarily by regulation of HisG enzymatic activity. The chain is ATP phosphoribosyltransferase from Albidiferax ferrireducens (strain ATCC BAA-621 / DSM 15236 / T118) (Rhodoferax ferrireducens).